Here is a 491-residue protein sequence, read N- to C-terminus: MASVFSVHPLPSSSFLCPLKTTKSRTKHHQTFYTYQKTILINSLQLTELDPKIPQPVQTFWQWLCKEGVVTTKTPVKPGIVPEGLGLVAKRDIAKGETVLQVPKRFWINPDAVAESEIGNVCSGLKPWISVALFLLREKWRDDSKWKYYMDVLPKSTDSTIYWSEEELSEIQGTQLLSTTMSVKDYVQNEFQKVEEEVILRNKQLFPFPITLDDFFWAFGILRSRAFSRLRNQNLILVPFADLTNHNARVTTEDHAHEVRGPAGLFSWDLLFSLRSPLKLKAGDQLFIQYDLNKSNADMALDYGFIEPSSARDAFTLTLEISESDEFYGDKLDIAETNGIGETAYFDIKIGQSLPPTMIPYLRLVALGGTDAFLLESIFRNSVWGHLGLPVSRANEELICKVVRDACKSALSGYHTTIEEDEKLMEEGNLSTRLQIAVGIRLGEKRVLKQIDDIFRERELELDELEYYGERRLKDLGLVGEQGDIIFWEPK.

The 225-residue stretch at 67–291 (EGVVTTKTPV…AGDQLFIQYD (225 aa)) folds into the SET domain.

This sequence belongs to the class V-like SAM-binding methyltransferase superfamily. Plant protein-lysine LSMT methyltransferase family.

It localises to the plastid. The protein resides in the chloroplast. It catalyses the reaction L-lysyl-[ribulose-1,5-bisphosphate carboxylase] + 3 S-adenosyl-L-methionine = N(6),N(6),N(6)-trimethyl-L-lysyl-[ribulose-1,5-bisphosphate carboxylase] + 3 S-adenosyl-L-homocysteine + 3 H(+). Functionally, methylates 'Lys-14' of the large subunit of RuBisCO. This Nicotiana tabacum (Common tobacco) protein is Ribulose-1,5 bisphosphate carboxylase/oxygenase large subunit N-methyltransferase, chloroplastic (RBCMT).